Reading from the N-terminus, the 194-residue chain is Peptidyl-tRNA hydrolase (194 aa).

Tyr16 is a tRNA binding site. Residue His21 is the Proton acceptor of the active site. Residues Phe67, Asn69, and Asn115 each coordinate tRNA.

Belongs to the PTH family. As to quaternary structure, monomer.

The protein localises to the cytoplasm. It carries out the reaction an N-acyl-L-alpha-aminoacyl-tRNA + H2O = an N-acyl-L-amino acid + a tRNA + H(+). Its function is as follows. Hydrolyzes ribosome-free peptidyl-tRNAs (with 1 or more amino acids incorporated), which drop off the ribosome during protein synthesis, or as a result of ribosome stalling. Functionally, catalyzes the release of premature peptidyl moieties from peptidyl-tRNA molecules trapped in stalled 50S ribosomal subunits, and thus maintains levels of free tRNAs and 50S ribosomes. The polypeptide is Peptidyl-tRNA hydrolase (Shigella boydii serotype 4 (strain Sb227)).